The following is a 302-amino-acid chain: Sulfate adenylyltransferase subunit 2 (302 aa).

It belongs to the PAPS reductase family. CysD subfamily. As to quaternary structure, heterodimer composed of CysD, the smaller subunit, and CysN.

It carries out the reaction sulfate + ATP + H(+) = adenosine 5'-phosphosulfate + diphosphate. The protein operates within sulfur metabolism; hydrogen sulfide biosynthesis; sulfite from sulfate: step 1/3. In terms of biological role, with CysN forms the ATP sulfurylase (ATPS) that catalyzes the adenylation of sulfate producing adenosine 5'-phosphosulfate (APS) and diphosphate, the first enzymatic step in sulfur assimilation pathway. APS synthesis involves the formation of a high-energy phosphoric-sulfuric acid anhydride bond driven by GTP hydrolysis by CysN coupled to ATP hydrolysis by CysD. This Yersinia pestis bv. Antiqua (strain Nepal516) protein is Sulfate adenylyltransferase subunit 2.